Reading from the N-terminus, the 289-residue chain is Bifunctional aminodeoxychorismate lyase / D-amino acid transaminase (289 aa).

Arg-50 serves as a coordination point for pyridoxal 5'-phosphate. At Lys-149 the chain carries N6-(pyridoxal phosphate)lysine. The pyridoxal 5'-phosphate site is built by Tyr-153, Thr-216, and Thr-217. Ser-252 serves as a coordination point for 2-oxoglutarate. Ser-253 serves as a coordination point for pyridoxal 5'-phosphate. Residues Met-254 and Thr-255 each coordinate 2-oxoglutarate.

The protein belongs to the class-IV pyridoxal-phosphate-dependent aminotransferase family. In terms of assembly, homodimer. It depends on pyridoxal 5'-phosphate as a cofactor.

It carries out the reaction 4-amino-4-deoxychorismate = 4-aminobenzoate + pyruvate + H(+). It catalyses the reaction D-alanine + 2-oxoglutarate = D-glutamate + pyruvate. The protein operates within cofactor biosynthesis; tetrahydrofolate biosynthesis; 4-aminobenzoate from chorismate: step 2/2. It participates in cell wall biogenesis; peptidoglycan biosynthesis. Bifunctional enzyme that catalyzes two enzymatic reactions in biochemically unrelated pathways: acts as an aminodeoxychorismate (ADC) lyase (ADCL) in folate biosynthesis, converting 4-amino-4-deoxychorismate (ADC) to 4-aminobenzoate (PABA), and as a D-amino acid transaminase (DAAT) in peptidoglycan (PG) biosynthesis. DAAT activity is strictly restricted to D-alanine and D-glutamate. May function as a metabolic toggle that alternates between ADCL and DAAT activity, prioritizing the former over the latter in response to substrate accumulation. Bifunctionality of this enzyme provides a failsafe mechanism for a metabolic coupling between nucleic acid and cell wall biosynthesis that appears to ensure prioritization of PABA production over D-alanine/D-glutamate biosynthesis. This is Bifunctional aminodeoxychorismate lyase / D-amino acid transaminase from Mycobacterium tuberculosis (strain ATCC 25618 / H37Rv).